Consider the following 573-residue polypeptide: Diflavin flavoprotein A 1 (573 aa).

The tract at residues 43–236 is zinc metallo-hydrolase; that stretch reads QNGTTYNSYL…GTISTVANGH (194 aa). Residues histidine 92, glutamate 94, aspartate 96, histidine 159, aspartate 178, and histidine 236 each contribute to the Fe cation site. The Flavodoxin-like domain maps to 265–401; sequence VVVFYVADYG…LCDESGTDLG (137 aa). The interval 424–573 is flavodoxin-reductase-like; sequence IGRISGGLYI…VHHRKVGNYY (150 aa).

This sequence in the N-terminal section; belongs to the zinc metallo-hydrolase group 3 family. It in the C-terminal section; belongs to the flavodoxin reductase family. As to quaternary structure, homodimer. Requires Fe cation as cofactor. The cofactor is FAD. FMN is required as a cofactor.

Its function is as follows. Mediates electron transfer from NADH to oxygen, reducing it to water. This modular protein has 3 redox cofactors, in other organisms the same activity requires 2 or 3 proteins. This Synechocystis sp. (strain ATCC 27184 / PCC 6803 / Kazusa) protein is Diflavin flavoprotein A 1 (dfa1).